A 171-amino-acid polypeptide reads, in one-letter code: Protein TIFY 11d (171 aa).

Residues 65-100 (PSAGTAPLTIFYDGRMVVVDDVPAEKAAELMRLAGS) form the Tify domain. The Jas signature appears at 117–142 (PIARKASLQRFLQKRKHRITTTSEPY). A Nuclear localization signal motif is present at residues 119-126 (ARKASLQR).

Belongs to the TIFY/JAZ family. Interacts with BHLH148 and COI1A. Interacts with COI1A, COI1B and COI2 in a coronatine-dependent manner. Coronatine is an analog of jasmonoyl isoleucine (JA-Ile). Post-translationally, ubiquitinated. Increase in jasmonoyl isoleucine (JA-Ile) levels mediates its degradation via COI1A-mediated proteasome pathway.

The protein localises to the nucleus. Repressor of jasmonate (JA) responses. May act on an initial response of JA-regulated gene expression toward drought tolerance as part of a BHLH148-TIFY11D/JAZ12-COI1A complex. The protein is Protein TIFY 11d of Oryza sativa subsp. indica (Rice).